A 40-amino-acid chain; its full sequence is MGLSDCLIYRLVVRCFLDYSICAPFYFYHKFMLSASEPVF.

The chain crosses the membrane as a helical span at residues 7–29; sequence LIYRLVVRCFLDYSICAPFYFYH.

In terms of tissue distribution, expressed in cotyledons, hypocotyls, roots, newly developing leaves and shoot apical meristem. Not detected in flowers, siliques or mature leaves.

It localises to the cytoplasm. The protein resides in the nucleus. It is found in the membrane. Negative regulator of the auxin response. In Arabidopsis thaliana (Mouse-ear cress), this protein is Auxin-responsive endogenous peptide 1.